Consider the following 315-residue polypeptide: Iron(3+)-hydroxamate-binding protein FhuD (315 aa).

An N-terminal signal peptide occupies residues 1–23 (MTHIYKKLGAAFFALLLIAALAA). C24 carries N-palmitoyl cysteine lipidation. C24 carries S-diacylglycerol cysteine lipidation. The Fe/B12 periplasmic-binding domain occupies 60–315 (RVVVMADGYY…LEFITESLTK (256 aa)).

The protein belongs to the bacterial solute-binding protein 8 family. In terms of assembly, the complex is composed of an ATP-binding protein (FhuC), two transmembrane proteins (FhuB and FhuG) and a solute-binding protein (FhuD or YxeB).

It localises to the cell membrane. The protein localises to the membrane raft. Part of the ABC transporter complex FhuCBGD involved in iron(3+)-hydroxamate import. Binds the iron(3+)-hydroxamate complex and transfers it to the membrane-bound permease. Required for the transport of ferrichrome and coprogen. This chain is Iron(3+)-hydroxamate-binding protein FhuD (fhuD), found in Bacillus subtilis (strain 168).